Reading from the N-terminus, the 470-residue chain is V-type proton ATPase subunit S1 (470 aa).

Positions 1–41 (MMAAMATARVRMGPRCAQALWRMPWLPVFLSLAAAAAAAAA) are cleaved as a signal peptide. The propeptide occupies 42–231 (EQQVPLVLWS…TAVRPSRVAR (190 aa)). Residues 42-419 (EQQVPLVLWS…EQFSYASDCA (378 aa)) lie on the Lumenal side of the membrane. N-linked (GlcNAc...) asparagine glycans are attached at residues Asn170, Asn261, Asn273, Asn296, Asn303, Asn350, and Asn357. Cys371 and Cys418 are joined by a disulfide. The helical transmembrane segment at 420-440 (SFFSPGIWMGLLTSLFMLFIF) threads the bilayer. Residues 441–470 (TYGLHMILSLKTMDRFDDHKGPTISLTQIV) lie on the Cytoplasmic side of the membrane. Ser465 carries the phosphoserine modification.

This sequence belongs to the vacuolar ATPase subunit S1 family. Accessory component of the multisubunit proton-transporting vacuolar (V)-ATPase protein pump. Interacts (via N-terminus) with ATP6AP2 (via N-terminus). Interacts with RNASEK. Interacts with TMEM106B (via C-terminus). Post-translationally, N-glycosylated. As to expression, widely expressed, with highest levels in brain and lowest in liver and duodenum.

The protein localises to the endoplasmic reticulum membrane. The protein resides in the endoplasmic reticulum-Golgi intermediate compartment membrane. Its subcellular location is the cytoplasmic vesicle. It localises to the secretory vesicle. It is found in the synaptic vesicle membrane. The protein localises to the clathrin-coated vesicle membrane. Functionally, accessory subunit of the proton-transporting vacuolar (V)-ATPase protein pump, which is required for luminal acidification of secretory vesicles. Guides the V-type ATPase into specialized subcellular compartments, such as neuroendocrine regulated secretory vesicles or the ruffled border of the osteoclast, thereby regulating its activity. Involved in membrane trafficking and Ca(2+)-dependent membrane fusion. May play a role in the assembly of the V-type ATPase complex. In aerobic conditions, involved in intracellular iron homeostasis, thus triggering the activity of Fe(2+) prolyl hydroxylase (PHD) enzymes, and leading to HIF1A hydroxylation and subsequent proteasomal degradation. In islets of Langerhans cells, may regulate the acidification of dense-core secretory granules. The protein is V-type proton ATPase subunit S1 (ATP6AP1) of Homo sapiens (Human).